A 202-amino-acid polypeptide reads, in one-letter code: Protein GrpE (202 aa).

Residues methionine 1–threonine 14 show a composition bias toward polar residues. The segment at methionine 1 to leucine 58 is disordered. Residues arginine 21–leucine 58 show a composition bias toward low complexity.

The protein belongs to the GrpE family. As to quaternary structure, homodimer.

It is found in the cytoplasm. Functionally, participates actively in the response to hyperosmotic and heat shock by preventing the aggregation of stress-denatured proteins, in association with DnaK and GrpE. It is the nucleotide exchange factor for DnaK and may function as a thermosensor. Unfolded proteins bind initially to DnaJ; upon interaction with the DnaJ-bound protein, DnaK hydrolyzes its bound ATP, resulting in the formation of a stable complex. GrpE releases ADP from DnaK; ATP binding to DnaK triggers the release of the substrate protein, thus completing the reaction cycle. Several rounds of ATP-dependent interactions between DnaJ, DnaK and GrpE are required for fully efficient folding. This chain is Protein GrpE, found in Paraburkholderia phymatum (strain DSM 17167 / CIP 108236 / LMG 21445 / STM815) (Burkholderia phymatum).